We begin with the raw amino-acid sequence, 368 residues long: Peptide chain release factor 2 (368 aa).

The disordered stretch occupies residues 36 to 56; it reads EAQAGDPSLWDDPDHAQKVTS. Gln250 is modified (N5-methylglutamine).

It belongs to the prokaryotic/mitochondrial release factor family. In terms of processing, methylated by PrmC. Methylation increases the termination efficiency of RF2.

It localises to the cytoplasm. Its function is as follows. Peptide chain release factor 2 directs the termination of translation in response to the peptide chain termination codons UGA and UAA. This chain is Peptide chain release factor 2, found in Corynebacterium aurimucosum (strain ATCC 700975 / DSM 44827 / CIP 107346 / CN-1) (Corynebacterium nigricans).